The sequence spans 197 residues: Phosphoheptose isomerase (197 aa).

Positions 34–196 (MVHCLLGGNK…DRTLFPQDEQ (163 aa)) constitute an SIS domain. 49–51 (NGG) contributes to the substrate binding site. The Zn(2+) site is built by histidine 58 and glutamate 62. Residues glutamate 62, 91–92 (ND), 117–119 (STS), serine 122, and glutamine 172 contribute to the substrate site. Glutamine 172 and histidine 180 together coordinate Zn(2+).

The protein belongs to the SIS family. GmhA subfamily. Homotetramer. Requires Zn(2+) as cofactor.

The protein resides in the cytoplasm. It carries out the reaction 2 D-sedoheptulose 7-phosphate = D-glycero-alpha-D-manno-heptose 7-phosphate + D-glycero-beta-D-manno-heptose 7-phosphate. It participates in carbohydrate biosynthesis; D-glycero-D-manno-heptose 7-phosphate biosynthesis; D-glycero-alpha-D-manno-heptose 7-phosphate and D-glycero-beta-D-manno-heptose 7-phosphate from sedoheptulose 7-phosphate: step 1/1. Functionally, catalyzes the isomerization of sedoheptulose 7-phosphate in D-glycero-D-manno-heptose 7-phosphate. This is Phosphoheptose isomerase from Shewanella sp. (strain W3-18-1).